The primary structure comprises 218 residues: Cytochrome b6 (218 aa).

The helical transmembrane segment at 35 to 55 (IFYCLGGITLTCFLVQVATGF) threads the bilayer. Position 38 (cysteine 38) interacts with heme c. Heme b is bound by residues histidine 89 and histidine 103. A run of 3 helical transmembrane segments spans residues 93–113 (ASMM…TGGF), 119–139 (LTWV…VTGY), and 189–209 (LHTF…FLMI). Histidine 190 and histidine 205 together coordinate heme b.

Belongs to the cytochrome b family. PetB subfamily. In terms of assembly, the 4 large subunits of the cytochrome b6-f complex are cytochrome b6, subunit IV (17 kDa polypeptide, PetD), cytochrome f and the Rieske protein, while the 4 small subunits are PetG, PetL, PetM and PetN. The complex functions as a dimer. Requires heme b as cofactor. Heme c serves as cofactor.

The protein localises to the plastid thylakoid membrane. In terms of biological role, component of the cytochrome b6-f complex, which mediates electron transfer between photosystem II (PSII) and photosystem I (PSI), cyclic electron flow around PSI, and state transitions. The polypeptide is Cytochrome b6 (petB) (Cuscuta gronovii (Common dodder)).